The sequence spans 228 residues: 2-C-methyl-D-erythritol 4-phosphate cytidylyltransferase (228 aa).

The protein belongs to the IspD/TarI cytidylyltransferase family. IspD subfamily.

It catalyses the reaction 2-C-methyl-D-erythritol 4-phosphate + CTP + H(+) = 4-CDP-2-C-methyl-D-erythritol + diphosphate. It participates in isoprenoid biosynthesis; isopentenyl diphosphate biosynthesis via DXP pathway; isopentenyl diphosphate from 1-deoxy-D-xylulose 5-phosphate: step 2/6. Functionally, catalyzes the formation of 4-diphosphocytidyl-2-C-methyl-D-erythritol from CTP and 2-C-methyl-D-erythritol 4-phosphate (MEP). This Dechloromonas aromatica (strain RCB) protein is 2-C-methyl-D-erythritol 4-phosphate cytidylyltransferase.